Consider the following 308-residue polypeptide: KH domain-containing protein At4g26480 (308 aa).

The tract at residues Met-1 to Val-26 is disordered. The span at Leu-7–Arg-24 shows a compositional bias: gly residues. The KH domain occupies Asp-165–Leu-232. The segment at Glu-284–Gly-308 is disordered. Phosphoserine is present on Ser-294.

Its subcellular location is the nucleus. In Arabidopsis thaliana (Mouse-ear cress), this protein is KH domain-containing protein At4g26480.